The chain runs to 453 residues: MSPQTETKAGVGFKAGVKEYKLTYYTPEYETKDTDILAAFRVTPQPGVPPEERGAAVAAESSTGTWTTVWTDGLTSLDRYKGRCYHIEPVPGEEEQFIAYVAYPLDLFEEGSVTNMFTSIVGNVFGFKALRALRLEDLRIPVAYVKTFQGPPHGIQVERDKLNKYGRPLLGCTIKPKLGLSAKNYGRAVYECLRGGLDFTKDDENVNSQPFMRWRDRFLFCAEAIYKSQAETGEIKGHYLNATAGTCEDMMKRAVFARELEVPIVMHDYLTGGFTANTTLSHYCRDNGLLLHIHRAMHAVIDRQKNHGMHFRVLAKALRMSGGDHIHSGTVVGKLEGERDITLGFVDLLRDDYIEKDRSRGIYFTQDWVSLPGVLPVASRGIHVWHMPALTEIFGDDSVLQFGGGTLGHPWGNAPGAVANRVALEACVKARNEGRDLAREGGEIIREACKWSP.

The propeptide occupies 1–2 (MS). N-acetylproline is present on Pro3. Lys14 is modified (N6,N6,N6-trimethyllysine). Residues Asn123 and Thr173 each coordinate substrate. Catalysis depends on Lys175, which acts as the Proton acceptor. Residue Lys177 participates in substrate binding. The Mg(2+) site is built by Lys201, Asp203, and Glu204. N6-carboxylysine is present on Lys201. His294 (proton acceptor) is an active-site residue. 3 residues coordinate substrate: Arg295, His327, and Ser379.

This sequence belongs to the RuBisCO large chain family. Type I subfamily. Heterohexadecamer of 8 large chains and 8 small chains; disulfide-linked. The disulfide link is formed within the large subunit homodimers. The cofactor is Mg(2+). The disulfide bond which can form in the large chain dimeric partners within the hexadecamer appears to be associated with oxidative stress and protein turnover.

It localises to the plastid. The protein resides in the chloroplast. It catalyses the reaction 2 (2R)-3-phosphoglycerate + 2 H(+) = D-ribulose 1,5-bisphosphate + CO2 + H2O. It carries out the reaction D-ribulose 1,5-bisphosphate + O2 = 2-phosphoglycolate + (2R)-3-phosphoglycerate + 2 H(+). Its function is as follows. RuBisCO catalyzes two reactions: the carboxylation of D-ribulose 1,5-bisphosphate, the primary event in carbon dioxide fixation, as well as the oxidative fragmentation of the pentose substrate in the photorespiration process. Both reactions occur simultaneously and in competition at the same active site. This chain is Ribulose bisphosphate carboxylase large chain, found in Sherardia arvensis (Blue field-madder).